The chain runs to 317 residues: GPI-specific phospholipase A2-like PGAP3 (317 aa).

The first 18 residues, 1 to 18 (MAPFLVLFLAGVVSASRG), serve as a signal peptide directing secretion. Residues 19–93 (DREPVYRDCV…QFHGKWPFSR (75 aa)) are Lumenal-facing. N-linked (GlcNAc...) asparagine glycosylation occurs at Asn-35. The helical transmembrane segment at 94 to 114 (FLFFQEPASALASFLNGVASL) threads the bilayer. Residues 115–132 (LMLFRYRSSVPSSCQMYR) lie on the Cytoplasmic side of the membrane. The chain crosses the membrane as a helical span at residues 133-153 (TCLAFSMVSVNAWFWSTIFHT). Residues 154 to 163 (RDTALTEKMD) lie on the Lumenal side of the membrane. Residues 164 to 180 (YFCASSVILHSIYLCCM) form a helical membrane-spanning segment. The Cytoplasmic segment spans residues 181-189 (RTFGLQYPS). Residues 190–210 (IANAFGAFLVLLFACHISYLT) form a helical membrane-spanning segment. Topologically, residues 211 to 219 (LGRFDYSYN) are lumenal. Residues 220 to 240 (MAANTSFGIVNLMWWLAWCMW) form a helical membrane-spanning segment. Over 241-251 (RRFHQPYLWKC) the chain is Cytoplasmic. The helical transmembrane segment at 252–272 (VLVVVLLQSLALLELLDFPPV) threads the bilayer. A topological domain (lumenal) is located at residue Met-273. Residues 274–293 (WILDAHALWHFSTIPLHFLF) traverse the membrane as a helical segment. Residues 294 to 317 (YSFLRDDSLYLLKVNHDDDIPKLD) are Cytoplasmic-facing.

Belongs to the PGAP3 family.

The protein resides in the golgi apparatus membrane. Involved in the fatty acid remodeling steps of GPI-anchor maturation where the unsaturated acyl chain at sn-2 of inositol phosphate is replaced by a saturated stearoyl chain. May catalyze the first step of the fatty acid remodeling, by removing the unsaturated acyl chain at sn-2 of inositol phosphate, generating a lyso-GPI intermediate. The fatty acid remodeling steps is critical for the integration of GPI-APs into lipid rafts. The chain is GPI-specific phospholipase A2-like PGAP3 from Xenopus laevis (African clawed frog).